Consider the following 416-residue polypeptide: Serine hydroxymethyltransferase (416 aa).

Residues L117 and 121–123 (GHL) contribute to the (6S)-5,6,7,8-tetrahydrofolate site. K225 is subject to N6-(pyridoxal phosphate)lysine. A (6S)-5,6,7,8-tetrahydrofolate-binding site is contributed by 351–353 (SPF).

The protein belongs to the SHMT family. As to quaternary structure, homodimer. It depends on pyridoxal 5'-phosphate as a cofactor.

Its subcellular location is the cytoplasm. It catalyses the reaction (6R)-5,10-methylene-5,6,7,8-tetrahydrofolate + glycine + H2O = (6S)-5,6,7,8-tetrahydrofolate + L-serine. Its pathway is one-carbon metabolism; tetrahydrofolate interconversion. It participates in amino-acid biosynthesis; glycine biosynthesis; glycine from L-serine: step 1/1. Functionally, catalyzes the reversible interconversion of serine and glycine with tetrahydrofolate (THF) serving as the one-carbon carrier. This reaction serves as the major source of one-carbon groups required for the biosynthesis of purines, thymidylate, methionine, and other important biomolecules. Also exhibits THF-independent aldolase activity toward beta-hydroxyamino acids, producing glycine and aldehydes, via a retro-aldol mechanism. The protein is Serine hydroxymethyltransferase of Blochmanniella pennsylvanica (strain BPEN).